Consider the following 443-residue polypeptide: tRNA-2-methylthio-N(6)-dimethylallyladenosine synthase (443 aa).

Residues 1 to 114 form the MTTase N-terminal domain; sequence MRFYIKTFGC…VTEAVKRALQ (114 aa). 6 residues coordinate [4Fe-4S] cluster: Cys-10, Cys-46, Cys-79, Cys-150, Cys-154, and Cys-157. The Radical SAM core domain maps to 136–367; sequence RSSKHHAWVT…MNLQKRINRK (232 aa). The TRAM domain maps to 370–431; the sequence is ERYKGKTVRV…AGPLYGKVVW (62 aa).

It belongs to the methylthiotransferase family. MiaB subfamily. As to quaternary structure, monomer. Requires [4Fe-4S] cluster as cofactor.

The protein resides in the cytoplasm. The catalysed reaction is N(6)-dimethylallyladenosine(37) in tRNA + (sulfur carrier)-SH + AH2 + 2 S-adenosyl-L-methionine = 2-methylsulfanyl-N(6)-dimethylallyladenosine(37) in tRNA + (sulfur carrier)-H + 5'-deoxyadenosine + L-methionine + A + S-adenosyl-L-homocysteine + 2 H(+). Its function is as follows. Catalyzes the methylthiolation of N6-(dimethylallyl)adenosine (i(6)A), leading to the formation of 2-methylthio-N6-(dimethylallyl)adenosine (ms(2)i(6)A) at position 37 in tRNAs that read codons beginning with uridine. The protein is tRNA-2-methylthio-N(6)-dimethylallyladenosine synthase of Thermotoga sp. (strain RQ2).